The chain runs to 266 residues: Ribonuclease 3 (266 aa).

Residues 1 to 35 (MMDESADIKPVPTSEDVAAPSGTEPVAPAPKKKRA) form a disordered region. Positions 43-171 (MAAIEQRLGH…VIGAVYLDGG (129 aa)) constitute an RNase III domain. Glu-84 provides a ligand contact to Mg(2+). Residue Asp-88 is part of the active site. Residues Asp-157 and Glu-160 each contribute to the Mg(2+) site. Glu-160 is a catalytic residue. Residues 196-265 (DPKTVLQEWA…ASAMIVREGV (70 aa)) enclose the DRBM domain.

The protein belongs to the ribonuclease III family. Homodimer. Requires Mg(2+) as cofactor.

It is found in the cytoplasm. It catalyses the reaction Endonucleolytic cleavage to 5'-phosphomonoester.. Functionally, digests double-stranded RNA. Involved in the processing of primary rRNA transcript to yield the immediate precursors to the large and small rRNAs (23S and 16S). Processes some mRNAs, and tRNAs when they are encoded in the rRNA operon. Processes pre-crRNA and tracrRNA of type II CRISPR loci if present in the organism. The sequence is that of Ribonuclease 3 from Nitrobacter winogradskyi (strain ATCC 25391 / DSM 10237 / CIP 104748 / NCIMB 11846 / Nb-255).